The sequence spans 306 residues: Ribonuclease Z (306 aa).

Residues His63, His65, Asp67, His68, His141, Asp211, and His269 each coordinate Zn(2+). The active-site Proton acceptor is Asp67.

The protein belongs to the RNase Z family. Homodimer. Requires Zn(2+) as cofactor.

The catalysed reaction is Endonucleolytic cleavage of RNA, removing extra 3' nucleotides from tRNA precursor, generating 3' termini of tRNAs. A 3'-hydroxy group is left at the tRNA terminus and a 5'-phosphoryl group is left at the trailer molecule.. Functionally, zinc phosphodiesterase, which displays some tRNA 3'-processing endonuclease activity. Probably involved in tRNA maturation, by removing a 3'-trailer from precursor tRNA. This Staphylococcus saprophyticus subsp. saprophyticus (strain ATCC 15305 / DSM 20229 / NCIMB 8711 / NCTC 7292 / S-41) protein is Ribonuclease Z.